The primary structure comprises 73 residues: Large ribosomal subunit protein bL31 (73 aa).

It belongs to the bacterial ribosomal protein bL31 family. Type A subfamily. In terms of assembly, part of the 50S ribosomal subunit.

Functionally, binds the 23S rRNA. In Bartonella tribocorum (strain CIP 105476 / IBS 506), this protein is Large ribosomal subunit protein bL31.